The chain runs to 376 residues: MYG1 exonuclease (376 aa).

Residues 1 to 47 (MGHRFLRGLLTLLLPPPPLYTRHRMLGPESVPPPKRSRSKLMAPPRI) constitute a mitochondrion transit peptide. S120 carries the post-translational modification Phosphoserine. An N6-acetyllysine mark is found at K267 and K273.

It belongs to the MYG1 family. Ubiquitously expressed, with highest levels in testis.

Its subcellular location is the nucleus. It localises to the nucleoplasm. The protein resides in the mitochondrion matrix. It is found in the nucleolus. In terms of biological role, 3'-5' RNA exonuclease which cleaves in situ on specific transcripts in both nucleus and mitochondrion. Involved in regulating spatially segregated organellar RNA processing, acts as a coordinator of nucleo-mitochondrial crosstalk. In nucleolus, processes pre-ribosomal RNA involved in ribosome assembly and alters cytoplasmic translation. In mitochondrial matrix, processes 3'-termini of the mito-ribosomal and messenger RNAs and controls translation of mitochondrial proteins. The sequence is that of MYG1 exonuclease from Homo sapiens (Human).